Consider the following 412-residue polypeptide: Serine hydroxymethyltransferase (412 aa).

(6S)-5,6,7,8-tetrahydrofolate contacts are provided by residues Leu-119 and 123–125 (GHL). N6-(pyridoxal phosphate)lysine is present on Lys-228.

It belongs to the SHMT family. Homodimer. Pyridoxal 5'-phosphate serves as cofactor.

It localises to the cytoplasm. The enzyme catalyses (6R)-5,10-methylene-5,6,7,8-tetrahydrofolate + glycine + H2O = (6S)-5,6,7,8-tetrahydrofolate + L-serine. It functions in the pathway one-carbon metabolism; tetrahydrofolate interconversion. The protein operates within amino-acid biosynthesis; glycine biosynthesis; glycine from L-serine: step 1/1. Catalyzes the reversible interconversion of serine and glycine with tetrahydrofolate (THF) serving as the one-carbon carrier. This reaction serves as the major source of one-carbon groups required for the biosynthesis of purines, thymidylate, methionine, and other important biomolecules. Also exhibits THF-independent aldolase activity toward beta-hydroxyamino acids, producing glycine and aldehydes, via a retro-aldol mechanism. The sequence is that of Serine hydroxymethyltransferase from Thermodesulfovibrio yellowstonii (strain ATCC 51303 / DSM 11347 / YP87).